Reading from the N-terminus, the 189-residue chain is uncharacterized protein (189 aa).

Belongs to the isochorismatase family.

This is an uncharacterized protein from Bacillus subtilis (strain 168).